A 307-amino-acid polypeptide reads, in one-letter code: D-alanine--D-alanine ligase (307 aa).

The region spanning 105 to 304 is the ATP-grasp domain; it reads KMLWKGFGLP…FEKLVEKILE (200 aa). Residue 135-190 participates in ATP binding; the sequence is VARLGLPLMVKPSREGSSVGLTKVDSADKLKSAVDLALKFDDIVLIEEWLSGDELT. The Mg(2+) site is built by Asp-258, Glu-271, and Asn-273.

The protein belongs to the D-alanine--D-alanine ligase family. Requires Mg(2+) as cofactor. It depends on Mn(2+) as a cofactor.

The protein resides in the cytoplasm. It carries out the reaction 2 D-alanine + ATP = D-alanyl-D-alanine + ADP + phosphate + H(+). The protein operates within cell wall biogenesis; peptidoglycan biosynthesis. Functionally, cell wall formation. This Actinobacillus succinogenes (strain ATCC 55618 / DSM 22257 / CCUG 43843 / 130Z) protein is D-alanine--D-alanine ligase.